The primary structure comprises 558 residues: Phosphatidylserine lipase ABHD16A (558 aa).

Transmembrane regions (helical) follow at residues isoleucine 60 to phenylalanine 80 and valine 93 to leucine 113. Residues arginine 114–leucine 558 are Cytoplasmic-facing. One can recognise an AB hydrolase-1 domain in the interval leucine 281 to leucine 407. Residues serine 355, aspartate 430, and histidine 507 each act as charge relay system in the active site.

The protein belongs to the AB hydrolase superfamily. ABHD16 family.

It localises to the membrane. It carries out the reaction 1-heptadecanoyl-2-(5Z,8Z,11Z,14Z-eicosatetraenoyl)-sn-glycero-3-phosphoserine + H2O = 1-heptadecanoyl-sn-glycero-3-phosphoserine + (5Z,8Z,11Z,14Z)-eicosatetraenoate + H(+). The catalysed reaction is 1-hexadecanoyl-2-(9Z-octadecenoyl)-sn-glycero-3-phospho-L-serine + H2O = 1-hexadecanoyl-sn-glycero-3-phospho-L-serine + (9Z)-octadecenoate + H(+). The enzyme catalyses 1-octadecanoyl-2-(9Z,12Z-octadecadienoyl)-sn-glycero-3-phosphoserine + H2O = 1-octadecanoyl-sn-glycero-3-phosphoserine + (9Z,12Z)-octadecadienoate + H(+). It catalyses the reaction 1-heptadecanoyl-2-(5Z,8Z,11Z,14Z-eicosatetraenoyl)-sn-glycero-3-phosphocholine + H2O = 1-heptadecanoyl-sn-glycero-3-phosphocholine + (5Z,8Z,11Z,14Z)-eicosatetraenoate + H(+). It carries out the reaction 1-hexadecanoyl-2-(9Z-octadecenoyl)-sn-glycero-3-phosphoglycerol + H2O = 1-hexadecanoyl-sn-glycero-3-phosphoglycerol + (9Z)-octadecenoate + H(+). The catalysed reaction is 1-hexadecanoyl-2-(9Z-octadecenoyl)-sn-glycero-3-phospho-(1D-myo-inositol) + H2O = 1-hexadecanoyl-sn-glycero-3-phospho-(1D-myo-inositol) + (9Z)-octadecenoate + H(+). The enzyme catalyses 1-heptadecanoyl-2-(5Z,8Z,11Z,14Z-eicosatetraenoyl)-sn-glycero-3-phosphoethanolamine + H2O = 1-heptadecanoyl-sn-glycero-3-phosphoethanolamine + (5Z,8Z,11Z,14Z)-eicosatetraenoate + H(+). It catalyses the reaction 1-hexadecanoyl-2-(9Z-octadecenoyl)-sn-glycero-3-phospho-(1'-sn-glycerol) + H2O = 1-hexadecanoyl-sn-glycero-3-phospho-(1'-sn-glycerol) + (9Z)-octadecenoate + H(+). It carries out the reaction Hydrolyzes glycerol monoesters of long-chain fatty acids.. The catalysed reaction is 1-tetradecanoylglycerol + H2O = tetradecanoate + glycerol + H(+). The enzyme catalyses 2-hexadecanoylglycerol + H2O = glycerol + hexadecanoate + H(+). It catalyses the reaction 1-(9Z-octadecenoyl)-glycerol + H2O = glycerol + (9Z)-octadecenoate + H(+). It carries out the reaction 2-(9Z-octadecenoyl)-glycerol + H2O = glycerol + (9Z)-octadecenoate + H(+). The catalysed reaction is 2-(9Z,12Z-octadecadienoyl)-glycerol + H2O = (9Z,12Z)-octadecadienoate + glycerol + H(+). The enzyme catalyses 1-(5Z,8Z,11Z,14Z-eicosatetraenoyl)-glycerol + H2O = glycerol + (5Z,8Z,11Z,14Z)-eicosatetraenoate + H(+). It catalyses the reaction 2-(5Z,8Z,11Z,14Z-eicosatetraenoyl)-glycerol + H2O = glycerol + (5Z,8Z,11Z,14Z)-eicosatetraenoate + H(+). It carries out the reaction prostaglandin D2-1-glycerol ester + H2O = prostaglandin D2 + glycerol + H(+). The catalysed reaction is 2-glyceryl-15-deoxy-Delta(12,14)-prostaglandin J2 + H2O = 15-deoxy-Delta(12,14)-prostaglandin J2 + glycerol + H(+). The enzyme catalyses 1-(9Z,12Z-octadecadienoyl)-glycerol + H2O = (9Z,12Z)-octadecadienoate + glycerol + H(+). Phosphatidylserine (PS) lipase that mediates the hydrolysis of phosphatidylserine to generate lysophosphatidylserine (LPS). LPS constitutes a class of signaling lipids that regulates immunological and neurological processes. Has no activity towards diacylglycerol, triacylglycerol or lysophosphatidylserine lipase. Also has monoacylglycerol lipase activity, with preference for 1-(9Z,12Z-octadecadienoyl)-glycerol (1-LG) and 2-glyceryl-15-deoxy-Delta(12,14)-prostaglandin J2 (15d-PGJ(2)-G). In Rattus norvegicus (Rat), this protein is Phosphatidylserine lipase ABHD16A.